The sequence spans 176 residues: Trypsin inhibitor 1B (176 aa).

Cystine bridges form between Cys39–Cys83 and Cys132–Cys143.

It belongs to the protease inhibitor I3 (leguminous Kunitz-type inhibitor) family.

In terms of biological role, inhibits trypsin stoichiometrically. This is Trypsin inhibitor 1B from Erythrina variegata (Indian coral tree).